A 79-amino-acid chain; its full sequence is Alpha-elapitoxin-Aa2e (79 aa).

Disulfide bonds link Cys-3–Cys-20, Cys-13–Cys-41, Cys-26–Cys-30, Cys-45–Cys-56, and Cys-57–Cys-62.

Belongs to the three-finger toxin family. Long-chain subfamily. Type II alpha-neurotoxin sub-subfamily. As to expression, expressed by the venom gland.

It localises to the secreted. Its function is as follows. Binds with high affinity to muscular (alpha-1/CHRNA1) and neuronal (alpha-7/CHRNA7) nicotinic acetylcholine receptor (nAChR) and inhibits acetylcholine from binding to the receptor, thereby impairing neuromuscular and neuronal transmission. Produces paralysis, clear dyspnea and lethality on mice. The sequence is that of Alpha-elapitoxin-Aa2e from Acanthophis antarcticus (Common death adder).